The primary structure comprises 264 residues: MRTYLDLLQHVLDHGVDRDDRTGTGTRSAFGYQMRFDLEEGFPVLTTKKLHLRSIIHELLWFLKGDTNIAYLKENGVTIWDEWADENGDLGPVYGYQWRSWPAPDGRHIDQIANLLKMLHTNPQSRRLIVSAWNPALVDEMALPPCHCLFQFYVANGRLSCQLYQRSADIFLGVPFNIASYALLTMMIAQVTGLKPGEFIHTLGDAHIYSNHFEQARLQLTRTPKKLPVMHINPDVKDLFAFRFEDFRLDGYEADPTIKAPIAV.

Arg-21 lines the dUMP pocket. Position 51 (His-51) interacts with (6R)-5,10-methylene-5,6,7,8-tetrahydrofolate. 126–127 contributes to the dUMP binding site; that stretch reads RR. Residue Cys-146 is the Nucleophile of the active site. DUMP contacts are provided by residues 166 to 169, Asn-177, and 207 to 209; these read RSAD and HIY. Asp-169 lines the (6R)-5,10-methylene-5,6,7,8-tetrahydrofolate pocket. Ala-263 contributes to the (6R)-5,10-methylene-5,6,7,8-tetrahydrofolate binding site.

Belongs to the thymidylate synthase family. Bacterial-type ThyA subfamily. In terms of assembly, homodimer.

Its subcellular location is the cytoplasm. It carries out the reaction dUMP + (6R)-5,10-methylene-5,6,7,8-tetrahydrofolate = 7,8-dihydrofolate + dTMP. Its pathway is pyrimidine metabolism; dTTP biosynthesis. Catalyzes the reductive methylation of 2'-deoxyuridine-5'-monophosphate (dUMP) to 2'-deoxythymidine-5'-monophosphate (dTMP) while utilizing 5,10-methylenetetrahydrofolate (mTHF) as the methyl donor and reductant in the reaction, yielding dihydrofolate (DHF) as a by-product. This enzymatic reaction provides an intracellular de novo source of dTMP, an essential precursor for DNA biosynthesis. The protein is Thymidylate synthase of Brucella ovis (strain ATCC 25840 / 63/290 / NCTC 10512).